A 355-amino-acid polypeptide reads, in one-letter code: Putative beta-lactamase HcpE (355 aa).

Positions 1–22 (MGVKFLKILVCGLFFWSLNAHL) are cleaved as a signal peptide. TPR repeat units lie at residues 27–60 (DNSFLGVAEKAYKSGNYSKATSYFKKACNDGVSE), 63–96 (TQLGIIYENGQGTRIDYKKALEYYKTACQADDRE), 98–131 (CFGLGGLYDEGLGTTQNYQEAIDAYAKACVLKHP), 132–166 (ESCYNLGIIYDRKIKGNADQAVTYYQKSCNFDMAK), 202–240 (GQACRALGSLFENGDAGLDEDFEVAFDYLQKACGLNNSG), 245–275 (LGSMYMLGRYVKKDPQKAFNFFKQACDMGSA), 276–311 (VSCSRMGFMYSQGDAVPKDLRKALDNYERGCDMGDE), and 312–344 (VGCFALAGMYYNMKDKENAIMIYDKGCKLGMKQ). 9 cysteine pairs are disulfide-bonded: cysteine 54–cysteine 62, cysteine 90–cysteine 98, cysteine 126–cysteine 134, cysteine 160–cysteine 168, cysteine 197–cysteine 205, cysteine 234–cysteine 242, cysteine 270–cysteine 278, cysteine 306–cysteine 314, and cysteine 338–cysteine 346.

It belongs to the hcp beta-lactamase family.

The protein resides in the secreted. It catalyses the reaction a beta-lactam + H2O = a substituted beta-amino acid. May hydrolyze 6-aminopenicillinic acid and 7-aminocephalosporanic acid (ACA) derivatives. The protein is Putative beta-lactamase HcpE (hcpE) of Helicobacter pylori (strain ATCC 700392 / 26695) (Campylobacter pylori).